A 139-amino-acid polypeptide reads, in one-letter code: Ribonuclease homolog (139 aa).

The N-terminal stretch at 1 to 23 (MAMSSLWWTAILLLALTVSMCYG) is a signal peptide. Catalysis depends on His-34, which acts as the Proton acceptor. 3 cysteine pairs are disulfide-bonded: Cys-49/Cys-102, Cys-64/Cys-111, and Cys-82/Cys-126. A substrate-binding site is contributed by 65–69 (KSFNT). Residue His-133 is the Proton donor of the active site.

Belongs to the pancreatic ribonuclease family.

The protein resides in the secreted. This Gallus gallus (Chicken) protein is Ribonuclease homolog.